Consider the following 282-residue polypeptide: 4-diphosphocytidyl-2-C-methyl-D-erythritol kinase (282 aa).

The active site involves lysine 8. 91 to 101 (PVAAGLAGGST) serves as a coordination point for ATP. Aspartate 133 is an active-site residue.

This sequence belongs to the GHMP kinase family. IspE subfamily.

It catalyses the reaction 4-CDP-2-C-methyl-D-erythritol + ATP = 4-CDP-2-C-methyl-D-erythritol 2-phosphate + ADP + H(+). It participates in isoprenoid biosynthesis; isopentenyl diphosphate biosynthesis via DXP pathway; isopentenyl diphosphate from 1-deoxy-D-xylulose 5-phosphate: step 3/6. Functionally, catalyzes the phosphorylation of the position 2 hydroxy group of 4-diphosphocytidyl-2C-methyl-D-erythritol. This chain is 4-diphosphocytidyl-2-C-methyl-D-erythritol kinase, found in Symbiobacterium thermophilum (strain DSM 24528 / JCM 14929 / IAM 14863 / T).